Reading from the N-terminus, the 199-residue chain is V-set and transmembrane domain-containing protein 5 (199 aa).

The N-terminal stretch at 1–27 is a signal peptide; sequence MRPPRCVGRTQGIPLGLLAFWVATARC. The Extracellular segment spans residues 28-146; the sequence is LQSQGVSLYI…VSEIRYEDLH (119 aa). One can recognise an Ig-like C2-type domain in the interval 36-138; the sequence is YIPRSAINAT…QSGTILLHVS (103 aa). Residues Asn43, Asn87, and Asn101 are each glycosylated (N-linked (GlcNAc...) asparagine). The helical transmembrane segment at 147–167 threads the bilayer; it reads FVAVFFALLAAVAVVLISLMW. The Cytoplasmic portion of the chain corresponds to 168–199; sequence VCNQCAYKFQRKRRYKLRESTTEEIEMKDVEC. Positions 169 to 185 are important for CDC42-dependent filopodia induction; the sequence is CNQCAYKFQRKRRYKLR.

As to quaternary structure, can homooligomerize through cis interactions within the same cell membrane. Post-translationally, N-glycosylated.

The protein resides in the cell membrane. It localises to the cell projection. It is found in the dendrite. The protein localises to the axon. Its function is as follows. Cell adhesion-like membrane protein of the central nervous system (CNS) which modulates both the position and complexity of central neurons by altering their membrane morphology and dynamics. Involved in the formation of neuronal dendrites and protrusions including dendritic filopodia. In synaptogenesis, regulates synapse formation by altering dendritic spine morphology and actin distribution. Promotes formation of unstable neuronal spines such as thin and branched types. Regulates neuronal morphogenesis and migration during cortical development in the brain. This chain is V-set and transmembrane domain-containing protein 5 (Vstm5), found in Rattus norvegicus (Rat).